Consider the following 156-residue polypeptide: UPF0232 protein BL0636 (156 aa).

The protein belongs to the UPF0232 family.

The sequence is that of UPF0232 protein BL0636 from Bifidobacterium longum (strain NCC 2705).